The chain runs to 104 residues: Naphthalene 1,2-dioxygenase system, ferredoxin component (104 aa).

The region spanning 6 to 101 (IEAVALSDIL…VKIENLRVMI (96 aa)) is the Rieske domain. Cysteine 45, histidine 47, cysteine 64, and histidine 67 together coordinate [2Fe-2S] cluster.

Belongs to the bacterial ring-hydroxylating dioxygenase ferredoxin component family. The naphthalene dioxygenase (NDO) multicomponent enzyme system is composed of an electron transfer component and a dioxygenase component (iron sulfur protein (ISP)). The electron transfer component is composed of a ferredoxin reductase (NdoR) and a ferredoxin (NdoA), and the dioxygenase component is formed of a heterohexamer (trimer of heterodimers) of three large alpha subunits (NdoB) and three small beta subunits (NdoC). [2Fe-2S] cluster serves as cofactor.

Its pathway is aromatic compound metabolism; naphthalene degradation. Its function is as follows. Component of the naphthalene dioxygenase (NDO) multicomponent enzyme system which catalyzes the incorporation of both atoms of molecular oxygen into naphthalene to form cis-(1R,2S)-dihydroxy-1,2-dihydronaphthalene. Functions as an intermediate electron transfer protein via a specific interaction with iron sulfur protein components (ISP) (NdoB and NdoC). Also able to catalyze the cis-dihydroxylation of biphenyl and phenanthrene. In Pseudomonas putida (Arthrobacter siderocapsulatus), this protein is Naphthalene 1,2-dioxygenase system, ferredoxin component.